Reading from the N-terminus, the 104-residue chain is Large ribosomal subunit protein bL21 (104 aa).

It belongs to the bacterial ribosomal protein bL21 family. Part of the 50S ribosomal subunit. Contacts protein L20.

Functionally, this protein binds to 23S rRNA in the presence of protein L20. The protein is Large ribosomal subunit protein bL21 of Elusimicrobium minutum (strain Pei191).